The following is a 441-amino-acid chain: Ankyrin repeat and MYND domain-containing protein 2 (441 aa).

ANK repeat units follow at residues 45 to 74, 79 to 108, and 159 to 188; these read NGMT…DVNC, HGYT…ETDV, and KLAG…NPLL. 8 residues coordinate Zn(2+): Cys-320, Cys-323, Cys-332, Cys-335, Cys-341, Cys-345, His-353, and Cys-357. Residues 320–357 form an MYND-type zinc finger; that stretch reads CTTCGEKGASKRCSVCKMVIYCDQTCQKTHWFTHKKIC. Basic and acidic residues predominate over residues 374-384; it reads EKRQEENHGKL. A disordered region spans residues 374–441; sequence EKRQEENHGK…APAGPQVSEE (68 aa).

In terms of assembly, interacts with the retinal-specific guanylyl cyclase GC1.

It localises to the cell projection. Its subcellular location is the cilium. May be involved in the trafficking of signaling proteins to the cilia. This Homo sapiens (Human) protein is Ankyrin repeat and MYND domain-containing protein 2 (ANKMY2).